The chain runs to 153 residues: MQCPYCNYKESKVIDSRHTDLKSIRRRRECESCKKRFTTYEKIETTPLMVIKKDNSREYFDREKIKYGLLKACEKRPVSIDEIESIVVHIENEINKCFIEEIETKKIGEMVMDKLKELDEVAYVRFASVYRQFKDINTFVNELKSILIEKGDK.

A zinc finger spans residues C3–C33. An ATP-cone domain is found at L48 to T138.

Belongs to the NrdR family. The cofactor is Zn(2+).

Negatively regulates transcription of bacterial ribonucleotide reductase nrd genes and operons by binding to NrdR-boxes. This chain is Transcriptional repressor NrdR, found in Clostridioides difficile (strain 630) (Peptoclostridium difficile).